The sequence spans 224 residues: IAP-like protein p27 (224 aa).

The BIR repeat unit spans residues 29 to 92 (VDARNQSFAI…GFWSRNCGFM (64 aa)). 4 residues coordinate Zn(2+): Cys62, Cys65, His82, and Cys89.

Functionally, not essential for growth or virulence. Does not have antiapoptotic function. The sequence is that of IAP-like protein p27 (p27) from Ornithodoros (relapsing fever ticks).